The chain runs to 164 residues: UPF0304 protein HSM_1818 (164 aa).

The protein belongs to the UPF0304 family.

This chain is UPF0304 protein HSM_1818, found in Histophilus somni (strain 2336) (Haemophilus somnus).